A 99-amino-acid chain; its full sequence is Large ribosomal subunit protein uL23 (99 aa).

Belongs to the universal ribosomal protein uL23 family. Part of the 50S ribosomal subunit. Contacts protein L29, and trigger factor when it is bound to the ribosome.

Its function is as follows. One of the early assembly proteins it binds 23S rRNA. One of the proteins that surrounds the polypeptide exit tunnel on the outside of the ribosome. Forms the main docking site for trigger factor binding to the ribosome. This chain is Large ribosomal subunit protein uL23, found in Blochmanniella floridana.